Consider the following 213-residue polypeptide: Riboflavin synthase (213 aa).

2 Lumazine-binding repeats span residues 1 to 97 and 98 to 195; these read MFTG…IGGH and LMSG…VDTV. 2,4-dihydroxypteridine is bound by residues 4 to 6, 48 to 50, 62 to 67, 101 to 103, Lys-137, 146 to 148, and 160 to 165; these read GIV, CLT, DLMKET, GHI, SLT, and HLIPET.

In terms of assembly, homotrimer. Unlike in B.subtilis, does not interact with 6,7-dimethyl-8-ribityllumazine synthase.

The enzyme catalyses 2 6,7-dimethyl-8-(1-D-ribityl)lumazine + H(+) = 5-amino-6-(D-ribitylamino)uracil + riboflavin. It participates in cofactor biosynthesis; riboflavin biosynthesis; riboflavin from 2-hydroxy-3-oxobutyl phosphate and 5-amino-6-(D-ribitylamino)uracil: step 2/2. In terms of biological role, catalyzes the dismutation of two molecules of 6,7-dimethyl-8-ribityllumazine, resulting in the formation of riboflavin and 5-amino-6-(D-ribitylamino)uracil. This Escherichia coli (strain K12) protein is Riboflavin synthase (ribC).